A 539-amino-acid chain; its full sequence is Alpha-copaene synthase (539 aa).

The Mg(2+) site is built by D290 and D294. Residues D290, D294, and R432 each coordinate substrate. A DDXXD motif motif is present at residues 290–294; that stretch reads DDTFD.

This sequence belongs to the terpene synthase family. Monomer. Mg(2+) serves as cofactor. It depends on Mn(2+) as a cofactor.

Its subcellular location is the cytoplasm. The enzyme catalyses (2E,6E)-farnesyl diphosphate = alpha-copaene + diphosphate. The catalysed reaction is (2E,6E)-farnesyl diphosphate = (+)-germacrene D + diphosphate. It carries out the reaction (2E,6E)-farnesyl diphosphate = (-)-(E)-beta-caryophyllene + diphosphate. It catalyses the reaction (2E,6E)-farnesyl diphosphate = delta-cadinene + diphosphate. The protein operates within secondary metabolite biosynthesis; terpenoid biosynthesis. In terms of biological role, converts farnesyl diphosphate to the bicyclic olefins alpha-copaene, (E)-beta-caryophyllene, and to the macrocyclic sesquiterpene germacrene D. Also mediates the biosynthesis of minor sesquiterpene hydrocarbons including delta-cadinene. Involved in indirect defense by producing volatile signals attracting natural enemies of herbivores. The chain is Alpha-copaene synthase from Zea mays (Maize).